We begin with the raw amino-acid sequence, 164 residues long: S-ribosylhomocysteine lyase (164 aa).

Positions 61, 65, and 131 each coordinate Fe cation.

The protein belongs to the LuxS family. Homodimer. The cofactor is Fe cation.

The catalysed reaction is S-(5-deoxy-D-ribos-5-yl)-L-homocysteine = (S)-4,5-dihydroxypentane-2,3-dione + L-homocysteine. Involved in the synthesis of autoinducer 2 (AI-2) which is secreted by bacteria and is used to communicate both the cell density and the metabolic potential of the environment. The regulation of gene expression in response to changes in cell density is called quorum sensing. Catalyzes the transformation of S-ribosylhomocysteine (RHC) to homocysteine (HC) and 4,5-dihydroxy-2,3-pentadione (DPD). The sequence is that of S-ribosylhomocysteine lyase from Bifidobacterium longum (strain NCC 2705).